We begin with the raw amino-acid sequence, 309 residues long: ATP-dependent Clp protease proteolytic subunit 3, chloroplastic (309 aa).

The transit peptide at 1–70 directs the protein to the chloroplast; sequence MEMSLRLASS…WDVSSFSIDS (70 aa). V71 carries the N-acetylvaline modification. S164 functions as the Nucleophile in the catalytic mechanism. The active site involves H189. The residue at position 194 (T194) is a Phosphothreonine. The disordered stretch occupies residues 290 to 309; that stretch reads DNTNLPSERSMTQNGYAAIE. Polar residues predominate over residues 292–309; the sequence is TNLPSERSMTQNGYAAIE.

Belongs to the peptidase S14 family. As to quaternary structure, component of the chloroplastic Clp protease core complex which consist of at least 16 proteins: CLPP4 (3 copies), CLPP5 (3 copies), CLPR4 (2 copies), ClpP1 (1 copy), CLPP6 (1 copy), CLPR2 (1 copy), CLPT1 (1 copy), CLPT2 (1 copy) and 3 copies of CLPP3 and/or CLPR1 and/or CLPR3. The core complex is organized in two heptameric rings, one containing CLPP3,4,5,6 in a 1:2:3:1 ratio and the other CLPP1 and CLPR1,2,3,4 in a 3:1:1:1:1 ratio. Interacts with CHIP. Post-translationally, ubiquitinated in vitro by CHIP. In terms of tissue distribution, mostly expressed in leaves. Also detected in stems, and to a lower extent, in roots (at protein level).

The protein localises to the plastid. The protein resides in the chloroplast stroma. The catalysed reaction is Hydrolysis of proteins to small peptides in the presence of ATP and magnesium. alpha-casein is the usual test substrate. In the absence of ATP, only oligopeptides shorter than five residues are hydrolyzed (such as succinyl-Leu-Tyr-|-NHMec, and Leu-Tyr-Leu-|-Tyr-Trp, in which cleavage of the -Tyr-|-Leu- and -Tyr-|-Trp bonds also occurs).. In terms of biological role, cleaves peptides in various proteins in a process that requires ATP hydrolysis. Has a chymotrypsin-like activity. Plays a major role in the degradation of misfolded proteins. In the absence of CLPP3, modified ClpPR core(s) could be formed, albeit at strongly reduced levels. This chain is ATP-dependent Clp protease proteolytic subunit 3, chloroplastic, found in Arabidopsis thaliana (Mouse-ear cress).